A 657-amino-acid polypeptide reads, in one-letter code: Probable potassium transport system protein Kup (657 aa).

The next 12 membrane-spanning stretches (helical) occupy residues 15–35 (SFLI…LYVM), 48–68 (ITPD…TLLT), 100–120 (WLII…MLTP), 147–167 (IIII…HFGT), 173–193 (IFGP…IVNL), 219–239 (LGFF…ALYS), 251–271 (LTWP…AAWI), 292–312 (MMPS…AIIA), 348–368 (IYMP…VLYF), 378–398 (YGLS…NYLL), 403–423 (PLPI…SFLI), and 431–451 (KGGF…YIWI).

The protein belongs to the HAK/KUP transporter (TC 2.A.72) family.

It is found in the cell membrane. The catalysed reaction is K(+)(in) + H(+)(in) = K(+)(out) + H(+)(out). In terms of biological role, transport of potassium into the cell. Likely operates as a K(+):H(+) symporter. The protein is Probable potassium transport system protein Kup of Clostridium perfringens (strain SM101 / Type A).